The chain runs to 540 residues: Probable pectinesterase/pectinesterase inhibitor 60 (540 aa).

An N-terminal signal peptide occupies residues 1-31; sequence MNIMMVQNISFLSLHLLLILLLCLRPLTTVA. Positions 32–185 are pectinesterase inhibitor 60; sequence DGNSTNIDGW…SHLISNCLAV (154 aa). 6 N-linked (GlcNAc...) asparagine glycosylation sites follow: Asn-34, Asn-91, Asn-95, Asn-120, Asn-161, and Asn-195. Residues 225–526 are pectinesterase 60; it reads NLVVAKDGSG…FSVGKFIAGT (302 aa). Thr-302 and Gln-332 together coordinate substrate. Asp-355 (proton donor; for pectinesterase activity) is an active-site residue. A disulfide bridge links Cys-369 with Cys-389. The Nucleophile; for pectinesterase activity role is filled by Asp-376. The substrate site is built by Arg-444 and Trp-446.

In the N-terminal section; belongs to the PMEI family. This sequence in the C-terminal section; belongs to the pectinesterase family. As to expression, expressed in siliques.

It localises to the secreted. It is found in the cell wall. It catalyses the reaction [(1-&gt;4)-alpha-D-galacturonosyl methyl ester](n) + n H2O = [(1-&gt;4)-alpha-D-galacturonosyl](n) + n methanol + n H(+). The protein operates within glycan metabolism; pectin degradation; 2-dehydro-3-deoxy-D-gluconate from pectin: step 1/5. Its function is as follows. Acts in the modification of cell walls via demethylesterification of cell wall pectin. The polypeptide is Probable pectinesterase/pectinesterase inhibitor 60 (PME60) (Arabidopsis thaliana (Mouse-ear cress)).